Here is a 591-residue protein sequence, read N- to C-terminus: Speriolin (591 aa).

Residues 1–42 (MSLLTNYEGLRHQIERLVRENEELKKLVRLIRENHELKSAIK) are a coiled coil. Positions 1-78 (MSLLTNYEGL…NNGVFLPPSP (78 aa)) are necessary for targeting centrosomes. A compositionally biased stretch (polar residues) spans 302 to 314 (NTSDTQAQPSAAQ). Disordered stretches follow at residues 302–331 (NTSDTQAQPSAAQEQVVPASVPTSPTTSPT) and 346–435 (ATSY…ENPR). The span at 317–331 (VVPASVPTSPTTSPT) shows a compositional bias: low complexity. Polar residues-rich tracts occupy residues 346–357 (ATSYTPSSTTHI) and 390–401 (PRTSSSPASVND).

Belongs to the speriolin family. Found in a complex with CDC20, CDC27 and TUBG1. Interacts with CDC20. In terms of tissue distribution, detected only in testis.

The protein resides in the cytoplasm. The protein localises to the cytoskeleton. It localises to the microtubule organizing center. It is found in the centrosome. In Homo sapiens (Human), this protein is Speriolin (SPATC1).